Consider the following 258-residue polypeptide: 5'-nucleotidase SurE (258 aa).

Positions 14, 15, 45, and 101 each coordinate a divalent metal cation.

The protein belongs to the SurE nucleotidase family. Requires a divalent metal cation as cofactor.

It localises to the cytoplasm. The catalysed reaction is a ribonucleoside 5'-phosphate + H2O = a ribonucleoside + phosphate. Its function is as follows. Nucleotidase that shows phosphatase activity on nucleoside 5'-monophosphates. The sequence is that of 5'-nucleotidase SurE from Chlorobium phaeobacteroides (strain DSM 266 / SMG 266 / 2430).